Here is a 131-residue protein sequence, read N- to C-terminus: uncharacterized protein (131 aa).

Its subcellular location is the plastid. The protein localises to the chloroplast. This is an uncharacterized protein from Chlorella vulgaris (Green alga).